Consider the following 524-residue polypeptide: MAAVAVAVREESRSEMKTELSPRPGAAGRELTQEEKLQLRKEKKQQKKKRKEEKGADQEIGSAVSAAQRQDPVRELQGTGSQLGGTTGEKLPAGRSKAELRAERRAKQEAERALKQARKGEQGGPSPQACPSTAGEATSGVKRVPEHTQADDPTLLRRLLRKPDRQQVPTRKDYGSKVSLFSHLPQYSRQSSLTQYMSIPSSVIHPAMVRLGLQYSQGLVSGSNARCIALLHALQQVIQDYTTPPNEELSRDLVNKLKPYISFLTQCRPMSASMCNAIKFFNKEVTGMSSSKREEEAKSELKEAIDRYVQEKIVLASQAISRFASKKISDGDVILVYGCSSLVSRILQEAWVEGRRFRVVVVDSRPRLEGRHMLHCLVRAGVPTSYLLIPAASYVLPEVSKVLLGAHALLANGSVMSRVGTAQLALVARAHNVPVLVCCETYKFCERVQTDAFVSNELDDPDDLQCKRGDQVTLANWQNNSSLRLLNLVYDVTPPELVDLVITELGMIPCSSVPVVLRVKSSDQ.

Residues 1-174 are disordered; it reads MAAVAVAVRE…RQQVPTRKDY (174 aa). A2 carries the N-acetylalanine modification. Basic and acidic residues-rich tracts occupy residues 8–20 and 31–40; these read VREE…KTEL and LTQEEKLQLR. A Phosphoserine modification is found at S12. Positions 41–51 are enriched in basic residues; the sequence is KEKKQQKKKRK. Position 86 is a phosphothreonine (T86). Composition is skewed to basic and acidic residues over residues 96 to 121 and 161 to 174; these read SKAE…RKGE and RKPD…RKDY. A may bind the chemical integrated stress response (ISR) inhibitor ISRIB region spans residues 171–180; it reads RKDYGSKVSL.

It belongs to the eIF-2B alpha/beta/delta subunits family. In terms of assembly, component of the translation initiation factor 2B (eIF2B) complex which is a heterodecamer of two sets of five different subunits: alpha, beta, gamma, delta and epsilon. Subunits alpha, beta and delta comprise a regulatory subcomplex and subunits epsilon and gamma comprise a catalytic subcomplex. Within the complex, the hexameric regulatory complex resides at the center, with the two heterodimeric catalytic subcomplexes bound on opposite sides.

The protein resides in the cytoplasm. Its subcellular location is the cytosol. Its activity is regulated as follows. Activated by the chemical integrated stress response (ISR) inhibitor ISRIB which stimulates guanine nucleotide exchange factor activity for both phosphorylated and unphosphorylated eIF2. Acts as a component of the translation initiation factor 2B (eIF2B) complex, which catalyzes the exchange of GDP for GTP on eukaryotic initiation factor 2 (eIF2) gamma subunit. Its guanine nucleotide exchange factor activity is repressed when bound to eIF2 complex phosphorylated on the alpha subunit, thereby limiting the amount of methionyl-initiator methionine tRNA available to the ribosome and consequently global translation is repressed. The protein is Translation initiation factor eIF2B subunit delta (Eif2b4) of Rattus norvegicus (Rat).